The primary structure comprises 509 residues: MPRHCCCFVFHFLLYMLLINIVKNNIITAFSHRHQALRERKNIFSNSPINYIYYLGANKHIYSKFSSVCEQKKLAHKKIAIKKWGIERNEKKKFTISLNNYNKIQQSKFMSKMVKENKASTKNENKCSINNTQDIRNFMNLKKEEKDEECDEKTKQDNNKENIKNETIVQKKKIDKNNKTKEKIKTKSETNKNTNITYPSIPKSIEKRWADYKKIIEYAKSTNVYLGAHISASGGVQNAPINSFNVSGLAFALFLKNQRKWESPPLTEENIKQFNENCKKYNFDKNLILPHGSYLINLANPDKEKREKSYLSFVDDIKRCEQLNIKLYNFHPGSTVGMCSTEQGIKNISDCINRAHKETSNVIIVLENSAGQKNSIGSKFEHLRDIISQIDDKERIGVCLDTCHTFAAGYDIKSYEKFEEVMNNFHNIVDSKYLKAVHLNDSKSDLGSGLDRHENIGKGKLTLDTFKYIMTSKYFKNIPIVLETPDITNDESVYKYEIEYLYKMCAKEQ.

A signal peptide spans 1–24 (MPRHCCCFVFHFLLYMLLINIVKN). The disordered stretch occupies residues 144-188 (EEKDEECDEKTKQDNNKENIKNETIVQKKKIDKNNKTKEKIKTKS). Composition is skewed to basic and acidic residues over residues 152 to 164 (EKTK…ENIK) and 175 to 188 (DKNN…KTKS). Residues His-291, His-331, Glu-367, Asp-401, His-404, His-438, Asp-451, His-453, and Glu-483 each coordinate Zn(2+). Position 404 (His-404) interacts with Mn(2+). Mn(2+) contacts are provided by Asp-451 and His-453.

The protein belongs to the AP endonuclease 2 family. Zn(2+) is required as a cofactor. Mn(2+) serves as cofactor. Post-translationally, may be proteolytically cleaved.

It localises to the mitochondrion. In terms of biological role, plays a role in mitochondrial DNA base excision repair (BER) pathway induced by oxidative stress. Has apurinic/apyrimidinic (AP) endonuclease activity towards double-stranded DNA (dsDNA) with a preference for C as opposite base. Has 3'-phosphatase activity; removes 3'-phosphate from blunt-end, recessed, and gapped DNA templates and thus, removes 3'-blocks for DNA polymerase activity during BER. Lacks 3'-5' exonuclease activity and does not cleave damaged bases by nucleotide incision repair (NIR). This Plasmodium berghei (strain Anka) protein is Apurinic-apyrimidinic endonuclease 1.